The following is a 767-amino-acid chain: Pyrin (767 aa).

The Pyrin domain maps to 1-92 (MAKTLGDHLL…AEELRKATGT (92 aa)). Positions 94–219 (HLIEENRVGG…LQGLYNNAPG (126 aa)) are disordered. Polar residues-rich tracts occupy residues 126–142 (GTQQ…SSQA), 165–176 (LDSQTKPWTRST), and 183–208 (TQGT…SSAG). S241 carries the post-translational modification Phosphoserine. Residues 311-346 (TSLIGEERCPTSWTENGNGSPETTESSGETAGSILS) form a disordered region. The segment covering 321 to 340 (TSWTENGNGSPETTESSGET) has biased composition (polar residues). The B box-type zinc finger occupies 439–481 (QSLPQCPRHMKQVLLLFCEDHREPICLICRLSLEHQGHRVRPI). Residues C444, H447, C467, and H473 each coordinate Zn(2+). Positions 481–510 (IEEAALEYKEQIREQLERLREMRGYVEEHR) form a coiled coil. The required for homotrimerization and induction of pyroptosomes stretch occupies residues 489 to 647 (KEQIREQLER…CFSEMLSSEM (159 aa)). Residues 697–719 (GGSEPKDYLHPQPAQDTPELHEI) are disordered.

Homotrimer. Interacts (via the B box-type zinc finger) with PSTPIP1. Interacts (via the B30.2/SPRY domain) with several components of the inflammasome complex, including CASP1 p20 and p10 subunits, CASP5, PYCARD, NLRP1, NLRP2 and NLRP3, as well as with unprocessed IL1B; this interaction may lead to autophagic degradation of these proteins. Component of the AIM2 PANoptosome complex, a multiprotein complex that drives inflammatory cell death (PANoptosis). Interacts with NFKBIA and RELA. Interacts weakly with VASP and ACTR3. Interacts with active ULK1 (phosphorylated on 'Ser-317') and BECN1 simultaneously. Also interacts with ATG16L1 (via WD repeats), and with ATG8 family members, including GABARAP, GABARAPL1 and, to a lesser extent, GABARAPL2, MAP1LC3A/LC3A and MAP1LC3C/LC3C. Interacts with TRIM21. Interacts with YWHAB, YWHAE, YWHAG, YWHAH, YWHAQ and YWHAZ; the interaction is required for the down-regulation of pyrin pro-inflammatory activity. In terms of processing, phosphorylation at Ser-241 is required for the interaction with 14-3-3 proteins and down-regulation of pyrin pro-inflammatory activity. Degraded along with the delivery of its substrates to autolysosomal compartments (at protein level). As to expression, expressed in spleen peripheral blood granulocytes. Not expressed in lymphocytes, thymus, testis, ovary, heart, brain, lung, liver, kidney and muscle.

It localises to the cytoplasm. The protein localises to the cytoskeleton. The protein resides in the cell projection. It is found in the ruffle. Its subcellular location is the lamellipodium. It localises to the cytoplasmic vesicle. The protein localises to the autophagosome. The protein resides in the nucleus. Functionally, involved in the regulation of innate immunity and the inflammatory response in response to IFNG/IFN-gamma. Organizes autophagic machinery by serving as a platform for the assembly of ULK1, Beclin 1/BECN1, ATG16L1, and ATG8 family members and recognizes specific autophagy targets, thus coordinating target recognition with assembly of the autophagic apparatus and initiation of autophagy. Acts as an autophagy receptor for the degradation of several inflammasome components, including CASP1, NLRP1 and NLRP3, hence preventing excessive IL1B- and IL18-mediated inflammation. However, it can also have a positive effect in the inflammatory pathway, acting as an innate immune sensor that triggers PYCARD/ASC specks formation, caspase-1 activation, and IL1B and IL18 production. Together with AIM2, also acts as a mediator of pyroptosis, necroptosis and apoptosis (PANoptosis), an integral part of host defense against pathogens, in response to bacterial infection. It is required for PSTPIP1-induced PYCARD/ASC oligomerization and inflammasome formation. Recruits PSTPIP1 to inflammasomes, and is required for PSTPIP1 oligomerization. The protein is Pyrin of Mus musculus (Mouse).